The chain runs to 339 residues: Lipopolysaccharide 1,2-glucosyltransferase (339 aa).

Residues 35–40 (GIDENY) and 132–133 (DA) each bind UDP. Mg(2+) contacts are provided by Asp132 and Asp134. 2 short sequence motifs (DXD) span residues 132–134 (DAD) and 219–221 (DQD). His268 provides a ligand contact to Mg(2+). UDP is bound at residue 268-274 (HYTGITK).

It belongs to the glycosyltransferase 8 family. It depends on Mg(2+) as a cofactor.

It localises to the cell inner membrane. The catalysed reaction is UDP-glucose + [lipopolysaccharide] = UDP + D-glucosyl-[lipopolysaccharide].. It functions in the pathway bacterial outer membrane biogenesis; LPS core biosynthesis. Its function is as follows. Glucosyltransferase involved in the biosynthesis of the core oligosaccharide region of lipopolysaccharide (LPS). Catalyzes the addition of a glucose (glucose II) to the outer-core galactose I. Has a marked preference for its specific donor substrate, but it appears to have a relaxed specificity for alternate LPS acceptor residues, providing the overall size of the acceptor is conserved. This chain is Lipopolysaccharide 1,2-glucosyltransferase, found in Escherichia coli.